We begin with the raw amino-acid sequence, 313 residues long: GTPase Era (313 aa).

The Era-type G domain maps to 13 to 186 (RSGFVSFVGR…ADLLVGLLPE (174 aa)). A G1 region spans residues 21 to 28 (GRPNAGKS). Residue 21–28 (GRPNAGKS) participates in GTP binding. A G2 region spans residues 47 to 51 (QTTRT). The G3 stretch occupies residues 68–71 (DTPG). GTP contacts are provided by residues 68–72 (DTPGL) and 131–134 (TKTD). The tract at residues 131–134 (TKTD) is G4. The interval 165–167 (VSA) is G5. Residues 217–299 (LRDELPHSVA…YLDLHVKIAK (83 aa)) form the KH type-2 domain.

Belongs to the TRAFAC class TrmE-Era-EngA-EngB-Septin-like GTPase superfamily. Era GTPase family. In terms of assembly, monomer.

It localises to the cytoplasm. The protein localises to the cell membrane. Its function is as follows. An essential GTPase that binds both GDP and GTP, with rapid nucleotide exchange. Plays a role in 16S rRNA processing and 30S ribosomal subunit biogenesis and possibly also in cell cycle regulation and energy metabolism. This chain is GTPase Era, found in Nocardioides sp. (strain ATCC BAA-499 / JS614).